The chain runs to 220 residues: Probable 26S proteasome regulatory subunit p27 (220 aa).

The PDZ domain occupies 119–196; the sequence is ARRNNDDQAI…PVLLLREGQI (78 aa).

This sequence belongs to the proteasome subunit p27 family. Part of a transient complex containing NAS2, RPT4 and RPT5 formed during the assembly of the 26S proteasome.

In terms of biological role, acts as a chaperone during the assembly of the 26S proteasome, specifically of the base subcomplex of the 19S regulatory complex (RC). During the base subcomplex assembly is part of a NAS2:RPT4:RPT5 module; NAS2 is released during the further base assembly process. The protein is Probable 26S proteasome regulatory subunit p27 (NAS2) of Saccharomyces cerevisiae (strain ATCC 204508 / S288c) (Baker's yeast).